A 177-amino-acid chain; its full sequence is MSRIGKKPVQVPAGVTASVDGQKVTAKGPKGELFFVANDEVSVKLENNAVVVQPLNESKDARAKWGMSRTMVENIFKGVKDGYERKLEINGVGYRASMQGKNLQLALGFSHDVVYQTPEGITIAVPKPTEIVVSGINKQQVGQVAAEIREYRGPEPYKGKGVKYAGERIVRKEGKKK.

This sequence belongs to the universal ribosomal protein uL6 family. In terms of assembly, part of the 50S ribosomal subunit.

This protein binds to the 23S rRNA, and is important in its secondary structure. It is located near the subunit interface in the base of the L7/L12 stalk, and near the tRNA binding site of the peptidyltransferase center. In Sinorhizobium fredii (strain NBRC 101917 / NGR234), this protein is Large ribosomal subunit protein uL6.